The following is a 655-amino-acid chain: Fructose-1,6-bisphosphatase class 3 (655 aa).

It belongs to the FBPase class 3 family. Mn(2+) is required as a cofactor.

The catalysed reaction is beta-D-fructose 1,6-bisphosphate + H2O = beta-D-fructose 6-phosphate + phosphate. It participates in carbohydrate biosynthesis; gluconeogenesis. This Porphyromonas gingivalis (strain ATCC BAA-308 / W83) protein is Fructose-1,6-bisphosphatase class 3.